A 370-amino-acid chain; its full sequence is Proto-oncogene Wnt-1 (370 aa).

Positions 1–27 (MGLWALLPSWVSTTLLLALTALPAALA) are cleaved as a signal peptide. Asn-29 carries an N-linked (GlcNAc...) asparagine glycan. Cystine bridges form between Cys-93/Cys-104, Cys-143/Cys-151, Cys-153/Cys-170, Cys-218/Cys-232, Cys-220/Cys-227, Cys-299/Cys-330, Cys-315/Cys-325, Cys-329/Cys-369, Cys-345/Cys-360, Cys-347/Cys-357, and Cys-352/Cys-353. A lipid anchor (O-palmitoleoyl serine; by PORCN) is attached at Ser-224. N-linked (GlcNAc...) asparagine glycosylation is found at Asn-316 and Asn-346. Asn-359 carries N-linked (GlcNAc...) asparagine glycosylation.

Belongs to the Wnt family. In terms of assembly, forms a soluble 1:1 complex with AFM; this prevents oligomerization and is required for prolonged biological activity. The complex with AFM may represent the physiological form in body fluids. Interacts with PORCN. Interacts with RSPO1, RSPO2 and RSPO3. Interacts with WLS. In terms of processing, palmitoleoylation is required for efficient binding to frizzled receptors. Palmitoleoylation is necessary for proper trafficking to cell surface. Depalmitoleoylated by NOTUM, leading to inhibit Wnt signaling pathway. As to expression, testis and mid-gestational embryos. In the testis, detected only in postmeiotic germ cells undergoing differentiation from round spermatids into mature spermatozoa. In the embryos, expression is restricted to the developing CNS in regions of the neural tube other than the telencephalon. Expressed in osteoblast; expression levels increase with advancing osteoblast differentiation. Expressed in the brain, femur, spleen, and hematopoietic bone marrow.

It localises to the secreted. The protein resides in the extracellular space. Its subcellular location is the extracellular matrix. Ligand for members of the frizzled family of seven transmembrane receptors. Acts in the canonical Wnt signaling pathway by promoting beta-catenin-dependent transcriptional activation. In some developmental processes, is also a ligand for the coreceptor RYK, thus triggering Wnt signaling. Plays an essential role in the development of the embryonic brain and central nervous system (CNS). Has a role in osteoblast function, bone development and bone homeostasis. This chain is Proto-oncogene Wnt-1 (Wnt1), found in Mus musculus (Mouse).